A 425-amino-acid polypeptide reads, in one-letter code: Nuclear hormone receptor family member nhr-13 (425 aa).

Positions 5–83 (PNSCEVCSSS…IGMKPLLVKS (79 aa)) form a DNA-binding region, nuclear receptor. 2 consecutive NR C4-type zinc fingers follow at residues 11–30 (CSSS…CKAC) and 46–71 (CIDQ…LKKC). The disordered stretch occupies residues 108–148 (VKENSEEIQNDDDPQESDAEMENESTPGPSSEPSENVSAEN). Acidic residues predominate over residues 113-130 (EEIQNDDDPQESDAEMEN). Residues 131–142 (ESTPGPSSEPSE) show a composition bias toward low complexity. The NR LBD domain occupies 147 to 414 (ENQETVTKFL…KSMISLTSFW (268 aa)).

This sequence belongs to the nuclear hormone receptor family. May interact with nuclear hormone receptor nhr-49.

It is found in the nucleus. In terms of biological role, orphan nuclear receptor. Involved in regulating fatty acid desaturase genes, acting in concert with nuclear hormone receptor nhr-49. This chain is Nuclear hormone receptor family member nhr-13 (nhr-13), found in Caenorhabditis elegans.